The chain runs to 952 residues: Probable RNA-binding protein 19 (952 aa).

The RRM 1 domain occupies serine 2–serine 79. Disordered regions lie at residues lysine 85–leucine 126, lysine 159–valine 267, and lysine 367–aspartate 395. Residues lysine 95–serine 109 show a composition bias toward low complexity. Residues lysine 163–glycine 180 are compositionally biased toward polar residues. 3 positions are modified to phosphoserine: serine 177, serine 179, and serine 183. Composition is skewed to acidic residues over residues glutamine 181–glutamine 196 and serine 224–glycine 251. RRM domains follow at residues tyrosine 293 to glutamine 368 and glycine 400 to isoleucine 478. Lysine 479 participates in a covalent cross-link: Glycyl lysine isopeptide (Lys-Gly) (interchain with G-Cter in SUMO2). Residues glutamate 481–asparagine 504 are disordered. The RRM 4 domain maps to threonine 584–isoleucine 656. The segment covering glutamine 664–valine 679 has biased composition (basic and acidic residues). Residues glutamine 664–isoleucine 719 are disordered. A Phosphoserine modification is found at serine 693. Residues glutamate 705 to serine 718 are compositionally biased toward acidic residues. RRM domains are found at residues cysteine 722–arginine 803 and serine 824–serine 904. Phosphoserine is present on residues serine 928 and serine 944.

It belongs to the RRM MRD1 family. Expressed in the crypts of Lieberkuhn of the intestine (at protein level).

It is found in the nucleus. The protein resides in the nucleolus. The protein localises to the nucleoplasm. It localises to the cytoplasm. Its subcellular location is the chromosome. Its function is as follows. Plays a role in embryo pre-implantation development. The sequence is that of Probable RNA-binding protein 19 (Rbm19) from Mus musculus (Mouse).